The sequence spans 396 residues: Decapping nuclease RAI1 (396 aa).

107 to 109 contacts substrate; the sequence is YRG. Glu-179 contributes to the a divalent metal cation binding site. Position 228 (Glu-228) interacts with substrate. A divalent metal cation is bound by residues Asp-230, Glu-249, and Leu-250. 2 residues coordinate substrate: Lys-251 and Gln-275.

The protein belongs to the DXO/Dom3Z family. As to quaternary structure, interacts with RAT1; the interaction is direct, stabilizes RAT1 protein structure and stimulates its exoribonuclease activity. The interaction also stimulates RAI1 pyrophosphohydrolase activity, probably by recruiting it to mRNA substrates. A divalent metal cation is required as a cofactor.

The protein resides in the nucleus. The enzyme catalyses a 5'-end NAD(+)-phospho-ribonucleoside in mRNA + H2O = a 5'-end phospho-ribonucleoside in mRNA + NAD(+) + H(+). The catalysed reaction is a 5'-end (N(7)-methyl 5'-triphosphoguanosine)-ribonucleoside-ribonucleotide in mRNA + H2O = a (N(7)-methyl 5'-triphosphoguanosine)-nucleoside + a 5'-end phospho-ribonucleoside in mRNA + H(+). It carries out the reaction a 5'-end triphospho-ribonucleoside in mRNA + H2O = a 5'-end phospho-ribonucleoside in mRNA + diphosphate + H(+). In terms of biological role, decapping enzyme for NAD-capped RNAs: specifically hydrolyzes the nicotinamide adenine dinucleotide (NAD) cap from a subset of RNAs by removing the entire NAD moiety from the 5'-end of an NAD-capped RNA. The NAD-cap is present at the 5'-end of some RNAs and snoRNAs. In contrast to the canonical 5'-end N7 methylguanosine (m7G) cap, the NAD cap promotes mRNA decay. Also acts as a non-canonical decapping enzyme that removes the entire cap structure of m7G capped or incompletely capped RNAs. Has decapping activity toward incomplete 5'-end m7G cap mRNAs such as unmethylated 5'-end-capped RNA (cap0), while it has no activity toward 2'-O-ribose methylated m7G cap (cap1). Also possesses RNA 5'-pyrophosphohydrolase activity by hydrolyzing the 5'-end triphosphate to release pyrophosphates. Stimulates exoribonuclease activity of Rat1, allowing it to degrade RNAs with stable secondary structure more effectively. This Scheffersomyces stipitis (strain ATCC 58785 / CBS 6054 / NBRC 10063 / NRRL Y-11545) (Yeast) protein is Decapping nuclease RAI1.